The chain runs to 192 residues: Adenylate kinase (192 aa).

Residue 10–15 (GAGKGT) coordinates ATP. Residues 30-59 (STGDMLREAIEKETEIGKQAKIFIESGALV) form an NMP region. AMP-binding positions include threonine 31, arginine 36, 57–59 (ALV), 85–88 (GYPR), and glutamine 92. Residues 126 to 142 (KRVEEVVAVGGKIRSDD) form an LID region. Arginine 127 contributes to the ATP binding site. Positions 139 and 150 each coordinate AMP. Alanine 178 contacts ATP.

Belongs to the adenylate kinase family. As to quaternary structure, monomer.

It is found in the cytoplasm. The enzyme catalyses AMP + ATP = 2 ADP. Its pathway is purine metabolism; AMP biosynthesis via salvage pathway; AMP from ADP: step 1/1. Its function is as follows. Catalyzes the reversible transfer of the terminal phosphate group between ATP and AMP. Plays an important role in cellular energy homeostasis and in adenine nucleotide metabolism. In Bartonella bacilliformis (strain ATCC 35685 / KC583 / Herrer 020/F12,63), this protein is Adenylate kinase.